The chain runs to 301 residues: tRNA uridine(34) hydroxylase (301 aa).

Residues 120–214 (SAPDVAVIDT…YLEDVPEDQS (95 aa)) enclose the Rhodanese domain. The Cysteine persulfide intermediate role is filled by Cys174.

The protein belongs to the TrhO family.

The enzyme catalyses uridine(34) in tRNA + AH2 + O2 = 5-hydroxyuridine(34) in tRNA + A + H2O. Its function is as follows. Catalyzes oxygen-dependent 5-hydroxyuridine (ho5U) modification at position 34 in tRNAs. The polypeptide is tRNA uridine(34) hydroxylase (Jannaschia sp. (strain CCS1)).